The following is a 131-amino-acid chain: UPF0146 protein PH0209 (131 aa).

This sequence belongs to the UPF0146 family.

This is UPF0146 protein PH0209 from Pyrococcus horikoshii (strain ATCC 700860 / DSM 12428 / JCM 9974 / NBRC 100139 / OT-3).